The chain runs to 1167 residues: ATP-dependent helicase/deoxyribonuclease subunit B (1167 aa).

Positions 1 to 359 constitute a UvrD-like helicase ATP-binding domain; sequence MSLRFLLGRS…IRQTEAYRDL (359 aa). An ATP-binding site is contributed by 8–15; the sequence is GRSGSGKT. Positions 282–588 constitute a UvrD-like helicase C-terminal domain; that stretch reads ANRRHEDRAL…EFSLVPPAMD (307 aa). [4Fe-4S] cluster contacts are provided by C804, C1126, C1129, and C1135.

This sequence belongs to the helicase family. AddB/RexB type 1 subfamily. Heterodimer of AddA and AddB. Mg(2+) serves as cofactor. It depends on [4Fe-4S] cluster as a cofactor.

In terms of biological role, the heterodimer acts as both an ATP-dependent DNA helicase and an ATP-dependent, dual-direction single-stranded exonuclease. Recognizes the chi site generating a DNA molecule suitable for the initiation of homologous recombination. The AddB subunit has 5' -&gt; 3' nuclease activity but not helicase activity. In Geobacillus kaustophilus (strain HTA426), this protein is ATP-dependent helicase/deoxyribonuclease subunit B.